A 398-amino-acid polypeptide reads, in one-letter code: Phosphoglycerate kinase (398 aa).

Residues 20–22, Arg35, 58–61, Arg118, and Arg155 contribute to the substrate site; these read DFN and HLGK. Residues Lys208, Gly296, Glu327, and 354-357 each bind ATP; that span reads GGDS.

The protein belongs to the phosphoglycerate kinase family. As to quaternary structure, monomer.

The protein localises to the cytoplasm. The catalysed reaction is (2R)-3-phosphoglycerate + ATP = (2R)-3-phospho-glyceroyl phosphate + ADP. Its pathway is carbohydrate degradation; glycolysis; pyruvate from D-glyceraldehyde 3-phosphate: step 2/5. In Fusobacterium nucleatum subsp. nucleatum (strain ATCC 25586 / DSM 15643 / BCRC 10681 / CIP 101130 / JCM 8532 / KCTC 2640 / LMG 13131 / VPI 4355), this protein is Phosphoglycerate kinase.